A 548-amino-acid chain; its full sequence is Eukaryotic translation initiation factor 3 subunit D (548 aa).

Residue Lys53 is modified to N6-acetyllysine. Ser161 bears the Phosphoserine mark. Residues 285-299 (DFDLLTVSETANEPP) are RNA gate. The tract at residues 523 to 548 (PDGTFSSDEDEEEEEEEEEEEEEEET) is disordered. 2 positions are modified to phosphoserine: Ser528 and Ser529. The segment covering 529–548 (SDEDEEEEEEEEEEEEEEET) has biased composition (acidic residues).

The protein belongs to the eIF-3 subunit D family. Component of the eukaryotic translation initiation factor 3 (eIF-3) complex, which is composed of 13 subunits: EIF3A, EIF3B, EIF3C, EIF3D, EIF3E, EIF3F, EIF3G, EIF3H, EIF3I, EIF3J, EIF3K, EIF3L and EIF3M. The eIF-3 complex appears to include 3 stable modules: module A is composed of EIF3A, EIF3B, EIF3G and EIF3I; module B is composed of EIF3F, EIF3H, and EIF3M; and module C is composed of EIF3C, EIF3D, EIF3E, EIF3K and EIF3L. EIF3C of module C binds EIF3B of module A and EIF3H of module B, thereby linking the three modules. EIF3J is a labile subunit that binds to the eIF-3 complex via EIF3B. The eIF-3 complex interacts with RPS6KB1 under conditions of nutrient depletion. Mitogenic stimulation leads to binding and activation of a complex composed of MTOR and RPTOR, leading to phosphorylation and release of RPS6KB1 and binding of EIF4B to eIF-3. As to quaternary structure, (Microbial infection) Interacts with Norwalk virus VPg protein.

The protein localises to the cytoplasm. Functionally, mRNA cap-binding component of the eukaryotic translation initiation factor 3 (eIF-3) complex, a complex required for several steps in the initiation of protein synthesis of a specialized repertoire of mRNAs. The eIF-3 complex associates with the 40S ribosome and facilitates the recruitment of eIF-1, eIF-1A, eIF-2:GTP:methionyl-tRNAi and eIF-5 to form the 43S pre-initiation complex (43S PIC). The eIF-3 complex stimulates mRNA recruitment to the 43S PIC and scanning of the mRNA for AUG recognition. The eIF-3 complex is also required for disassembly and recycling of post-termination ribosomal complexes and subsequently prevents premature joining of the 40S and 60S ribosomal subunits prior to initiation. The eIF-3 complex specifically targets and initiates translation of a subset of mRNAs involved in cell proliferation, including cell cycling, differentiation and apoptosis, and uses different modes of RNA stem-loop binding to exert either translational activation or repression. In the eIF-3 complex, EIF3D specifically recognizes and binds the 7-methylguanosine cap of a subset of mRNAs. Its function is as follows. (Microbial infection) In case of FCV infection, plays a role in the ribosomal termination-reinitiation event leading to the translation of VP2. This chain is Eukaryotic translation initiation factor 3 subunit D, found in Homo sapiens (Human).